The chain runs to 856 residues: Serine/threonine-protein phosphatase 6 regulatory subunit 1 (856 aa).

Residues 10 to 403 are interaction with PPP6C; sequence SSHLDTLLEK…VFNNFLHAQV (394 aa). At serine 232 the chain carries Phosphoserine. Threonine 524 is subject to Phosphothreonine. Residues serine 529, serine 530, and serine 531 each carry the phosphoserine modification. A compositionally biased stretch (acidic residues) spans 621 to 630; sequence DDEEEEEEEG. Disordered stretches follow at residues 621-770 and 792-856; these read DDEE…KVAE and RSAP…SGSQ. Phosphoserine is present on residues serine 633 and serine 636. Positions 644-656 are enriched in polar residues; it reads QGSQPVRASQASQ. A compositionally biased stretch (acidic residues) spans 667–683; sequence DSEEEDEEEDEEEDEGA. A phosphoserine mark is found at serine 698 and serine 739. The segment covering 794–809 has biased composition (polar residues); it reads APSSLDSATRDPSTSV. Position 826 is a phosphoserine (serine 826). A compositionally biased stretch (low complexity) spans 842-856; the sequence is PNGSTPGGPISSGSQ.

Belongs to the SAPS family. As to quaternary structure, protein phosphatase 6 (PP6) holoenzyme is proposed to be a heterotrimeric complex formed of the catalytic subunit, a SAPS domain-containing subunit (PP6R) and an ankyrin repeat-domain containing regulatory subunit (ARS). Interacts with PPP6C and NFKBIE. Interacts with ANKRD28, ANKRD44 and ANKRD52. Ubiquitous with highest expression in lung, spleen and bladder.

The protein localises to the cytoplasm. Functionally, regulatory subunit of protein phosphatase 6 (PP6). May function as a scaffolding PP6 subunit. Involved in the PP6-mediated dephosphorylation of NFKBIE opposing its degradation in response to TNF-alpha. The sequence is that of Serine/threonine-protein phosphatase 6 regulatory subunit 1 (Ppp6r1) from Mus musculus (Mouse).